An 890-amino-acid polypeptide reads, in one-letter code: Alanine--tRNA ligase (890 aa).

4 residues coordinate Zn(2+): H567, H571, C680, and H684.

The protein belongs to the class-II aminoacyl-tRNA synthetase family. Zn(2+) serves as cofactor.

It is found in the cytoplasm. The enzyme catalyses tRNA(Ala) + L-alanine + ATP = L-alanyl-tRNA(Ala) + AMP + diphosphate. In terms of biological role, catalyzes the attachment of alanine to tRNA(Ala) in a two-step reaction: alanine is first activated by ATP to form Ala-AMP and then transferred to the acceptor end of tRNA(Ala). Also edits incorrectly charged Ser-tRNA(Ala) and Gly-tRNA(Ala) via its editing domain. The chain is Alanine--tRNA ligase from Ruegeria pomeroyi (strain ATCC 700808 / DSM 15171 / DSS-3) (Silicibacter pomeroyi).